Reading from the N-terminus, the 349-residue chain is Anthranilate phosphoribosyltransferase (349 aa).

Residues Gly-82, 85 to 86 (GD), 92 to 95 (NVST), 110 to 118 (KHGNRAVSG), and Ser-122 contribute to the 5-phospho-alpha-D-ribose 1-diphosphate site. Residue Gly-82 participates in anthranilate binding. Ser-94 serves as a coordination point for Mg(2+). Asn-113 serves as a coordination point for anthranilate. Arg-168 lines the anthranilate pocket. The Mg(2+) site is built by Asp-227 and Glu-228.

Belongs to the anthranilate phosphoribosyltransferase family. Homodimer. Mg(2+) is required as a cofactor.

It carries out the reaction N-(5-phospho-beta-D-ribosyl)anthranilate + diphosphate = 5-phospho-alpha-D-ribose 1-diphosphate + anthranilate. The protein operates within amino-acid biosynthesis; L-tryptophan biosynthesis; L-tryptophan from chorismate: step 2/5. Catalyzes the transfer of the phosphoribosyl group of 5-phosphorylribose-1-pyrophosphate (PRPP) to anthranilate to yield N-(5'-phosphoribosyl)-anthranilate (PRA). In Pseudomonas syringae pv. tomato (strain ATCC BAA-871 / DC3000), this protein is Anthranilate phosphoribosyltransferase.